Consider the following 1400-residue polypeptide: DNA-directed RNA polymerase subunit beta' (1400 aa).

Cysteine 71, cysteine 73, cysteine 86, and cysteine 89 together coordinate Zn(2+). Mg(2+) is bound by residues aspartate 462, aspartate 464, and aspartate 466. Zn(2+)-binding residues include cysteine 810, cysteine 884, cysteine 891, and cysteine 894. The disordered stretch occupies residues 1378 to 1400 (EKQATIVPPAAPEAEPLALPPAE).

The protein belongs to the RNA polymerase beta' chain family. The RNAP catalytic core consists of 2 alpha, 1 beta, 1 beta' and 1 omega subunit. When a sigma factor is associated with the core the holoenzyme is formed, which can initiate transcription. Mg(2+) is required as a cofactor. It depends on Zn(2+) as a cofactor.

The enzyme catalyses RNA(n) + a ribonucleoside 5'-triphosphate = RNA(n+1) + diphosphate. In terms of biological role, DNA-dependent RNA polymerase catalyzes the transcription of DNA into RNA using the four ribonucleoside triphosphates as substrates. The chain is DNA-directed RNA polymerase subunit beta' from Rhodopseudomonas palustris (strain BisB5).